A 222-amino-acid chain; its full sequence is Endonuclease V (222 aa).

Mg(2+) contacts are provided by Asp34 and Asp102.

It belongs to the endonuclease V family. The cofactor is Mg(2+).

The protein localises to the cytoplasm. The enzyme catalyses Endonucleolytic cleavage at apurinic or apyrimidinic sites to products with a 5'-phosphate.. In terms of biological role, DNA repair enzyme involved in the repair of deaminated bases. Selectively cleaves double-stranded DNA at the second phosphodiester bond 3' to a deoxyinosine leaving behind the intact lesion on the nicked DNA. This is Endonuclease V from Photorhabdus laumondii subsp. laumondii (strain DSM 15139 / CIP 105565 / TT01) (Photorhabdus luminescens subsp. laumondii).